The primary structure comprises 257 residues: Phosphonates import ATP-binding protein PhnC (257 aa).

An ABC transporter domain is found at 4 to 248; sequence IEFKDVNKVY…VFNDIYGRKL (245 aa). 37 to 44 contacts ATP; it reads GLSGAGKS.

The protein belongs to the ABC transporter superfamily. Phosphonates importer (TC 3.A.1.9.1) family. As to quaternary structure, the complex is composed of two ATP-binding proteins (PhnC), two transmembrane proteins (PhnE) and a solute-binding protein (PhnD).

The protein resides in the cell membrane. The enzyme catalyses phosphonate(out) + ATP + H2O = phosphonate(in) + ADP + phosphate + H(+). Its function is as follows. Part of the ABC transporter complex PhnCDE involved in phosphonates import. Responsible for energy coupling to the transport system. The protein is Phosphonates import ATP-binding protein PhnC of Staphylococcus haemolyticus (strain JCSC1435).